A 64-amino-acid chain; its full sequence is DNA-binding protein 7 (64 aa).

2 positions are modified to N6-methyllysine: lysine 5 and lysine 7.

The protein belongs to the 7 kDa DNA-binding/endoribonuclease P2 family. As to quaternary structure, monomer.

The protein localises to the cytoplasm. In terms of biological role, can constrain negative DNA supercoils. May be involved in maintaining the integrity of the genome at high temperature. The protein is DNA-binding protein 7 of Sulfurisphaera tokodaii (strain DSM 16993 / JCM 10545 / NBRC 100140 / 7) (Sulfolobus tokodaii).